We begin with the raw amino-acid sequence, 277 residues long: Basic leucine zipper transcriptional factor ATF-like 2 (277 aa).

Disordered regions lie at residues 15-50, 126-146, and 191-256; these read LGES…HQQH, FQTP…CSHE, and SFSK…QKSS. In terms of domain architecture, bZIP spans 18–81; the sequence is SQKQLKKKQK…AGWGRTLHLH (64 aa). The interval 20 to 42 is basic motif; it reads KQLKKKQKNRVAAQRSRQKHTSK. The span at 41–50 shows a compositional bias: basic and acidic residues; it reads SKADALHQQH. The segment at 46 to 67 is leucine-zipper; that stretch reads LHQQHESLEKQNHALRKEIQAL. Composition is skewed to polar residues over residues 213–227 and 247–256; these read RQEQ…SSDS and GSSTHWQKSS.

This sequence belongs to the bZIP family. Heterodimer; heterodimerizes with JUN family proteins.

It localises to the nucleus. AP-1 family transcription factor that controls the differentiation of lineage-specific cells in the immune system. Selectively suppresses CCN1 transcription and hence blocks the downstream cell proliferation signals produced by CCN1 and inhibits CCN1-induced anchorage-independent growth and invasion in several cancer types. Possibly acts by interfering with AP-1 binding to CCN1 promoter. Following infection, participates in the differentiation of CD8(+) thymic conventional dendritic cells in the immune system. Acts via the formation of a heterodimer with JUN family proteins that recognizes and binds DNA sequence 5'-TGA[CG]TCA-3' and regulates expression of target genes. The sequence is that of Basic leucine zipper transcriptional factor ATF-like 2 (Batf2) from Mus musculus (Mouse).